A 228-amino-acid polypeptide reads, in one-letter code: Leucine rich adaptor protein 1-like (228 aa).

Methionine 1 is subject to N-acetylmethionine. Residues 1–89 are disordered; the sequence is MEDSPLPDLR…GSPRGSHSSA (89 aa). Basic and acidic residues-rich tracts occupy residues 8–21 and 28–42; these read DLRDIELKLGRKVP and LRGEEPVPRERDRDP. Over residues 44-56 the composition is skewed to gly residues; the sequence is GGSGGGGGGGGGC. Low complexity predominate over residues 57–88; it reads SSSSSYCSFPPSLSSSSSSSPTSGSPRGSHSS.

The sequence is that of Leucine rich adaptor protein 1-like (LURAP1L) from Homo sapiens (Human).